The chain runs to 540 residues: Probable quinate permease (540 aa).

Residues 1–22 (MSILALVEDRPTPKEVYNWRIY) are Cytoplasmic-facing. The chain crosses the membrane as a helical span at residues 23–43 (LLAAVASFTSCMIGYDSAFIG). At 44–74 (TTLALGSFREEFEFTTMEPAAVNRVSANIVS) the chain is on the extracellular side. Residues 75–95 (CYQAGAFFGAFFAYPIGHFWG) traverse the membrane as a helical segment. Residues 96–97 (RK) are Cytoplasmic-facing. Residues 98–118 (WGLLSAAAIFTLGAGLMLGAN) form a helical membrane-spanning segment. Residues 119–130 (GDRGLGLIYGGR) are Extracellular-facing. Residues 131 to 151 (VLAGIGVGAGSNITPIYISEL) form a helical membrane-spanning segment. Topologically, residues 152-157 (APPSIR) are cytoplasmic. A helical membrane pass occupies residues 158–178 (GHLVGVYELGWQIGGLVGFWI). Over 179-193 (NYGVSETLAPSHKQW) the chain is Extracellular. The helical transmembrane segment at 194-214 (IIPFAVQLIPSGLLLIGAVFL) threads the bilayer. Over 215-285 (RESPRWLFSS…AGTNKKVMYR (71 aa)) the chain is Cytoplasmic. Residues 286-306 (LFLGSMLFFWQNGSGINAINY) form a helical membrane-spanning segment. The Extracellular portion of the chain corresponds to 307 to 325 (YSPTVFKSIGLRGTNTGMF). The chain crosses the membrane as a helical span at residues 326 to 346 (STGIFGVVKTVVTFIWLLYLI). The Cytoplasmic portion of the chain corresponds to 347 to 352 (DRMGRR). A helical membrane pass occupies residues 353–373 (LLLLVGAAGASVCLWIVGAYI). The Extracellular portion of the chain corresponds to 374-387 (KIANPAKNGNGEMT). Residues 388-408 (GGGIAAMFFFYLYTVFYTPSW) traverse the membrane as a helical segment. At 409–456 (NGTPWVMNSEMFEPNMRSLAQACAAASNWLWNFLISRFTPQMFDKMGY) the chain is on the cytoplasmic side. The chain crosses the membrane as a helical span at residues 457-477 (GVWFFFASLMLCSIVIVFFLI). Residues 478-540 (PETKGIPLES…RLESVQPKEA (63 aa)) lie on the Extracellular side of the membrane. The tract at residues 519–540 (IEESGYTKSGEQRLESVQPKEA) is disordered. The segment covering 528–540 (GEQRLESVQPKEA) has biased composition (basic and acidic residues).

This sequence belongs to the major facilitator superfamily. Sugar transporter (TC 2.A.1.1) family. As to quaternary structure, interacts with creB. Post-translationally, ubiquitinated. Deubiquitinated by creB, probably to control its activity or amount.

It is found in the cell membrane. In terms of biological role, integral membrane transporter that imports quinic acid to be catabolized as a carbon source. This is Probable quinate permease (qutD) from Aspergillus clavatus (strain ATCC 1007 / CBS 513.65 / DSM 816 / NCTC 3887 / NRRL 1 / QM 1276 / 107).